A 130-amino-acid polypeptide reads, in one-letter code: Small ribosomal subunit protein uS11 (130 aa).

It belongs to the universal ribosomal protein uS11 family. Part of the 30S ribosomal subunit. Interacts with proteins S7 and S18. Binds to IF-3.

In terms of biological role, located on the platform of the 30S subunit, it bridges several disparate RNA helices of the 16S rRNA. Forms part of the Shine-Dalgarno cleft in the 70S ribosome. The polypeptide is Small ribosomal subunit protein uS11 (Campylobacter lari (strain RM2100 / D67 / ATCC BAA-1060)).